The chain runs to 148 residues: Large ribosomal subunit protein uL15 (148 aa).

Positions 1–51 (MNLSNLKPAEGSTKTRKRIGRGPGSGLGGTSTRGHKGAKSRSGYSKKIGFE) are disordered. Over residues 21–31 (RGPGSGLGGTS) the composition is skewed to gly residues.

The protein belongs to the universal ribosomal protein uL15 family. In terms of assembly, part of the 50S ribosomal subunit.

Functionally, binds to the 23S rRNA. This chain is Large ribosomal subunit protein uL15, found in Phocaeicola vulgatus (strain ATCC 8482 / DSM 1447 / JCM 5826 / CCUG 4940 / NBRC 14291 / NCTC 11154) (Bacteroides vulgatus).